A 116-amino-acid chain; its full sequence is Large ribosomal subunit protein bL19 (116 aa).

Belongs to the bacterial ribosomal protein bL19 family.

In terms of biological role, this protein is located at the 30S-50S ribosomal subunit interface and may play a role in the structure and function of the aminoacyl-tRNA binding site. The sequence is that of Large ribosomal subunit protein bL19 from Clostridioides difficile (strain 630) (Peptoclostridium difficile).